The following is a 947-amino-acid chain: Protocadherin alpha-4 (947 aa).

Positions 1-29 (MEFSWGSGQESRRLLLLLLLLSAWEAGNG) are cleaved as a signal peptide. Cadherin domains follow at residues 30 to 133 (QLHY…PPVF), 134 to 242 (PATQ…APAF), 243 to 350 (DRTI…VPDL), 351 to 455 (EFKS…APAF), 456 to 565 (AQPE…APAL), and 588 to 678 (DHVV…APKA). The Extracellular segment spans residues 30 to 697 (QLHYSVSEEA…GPDAALVDVN (668 aa)). A disulfide bond links C96 and C102. Residues N139, N257, and N265 are each glycosylated (N-linked (GlcNAc...) asparagine). Residue N548 is glycosylated (N-linked (GlcNAc...) asparagine). The chain crosses the membrane as a helical span at residues 698 to 718 (VYLIIAICAVSSLLVLTLLLY). Residues 719 to 947 (TALRCSAPPT…GNSTTDNSDQ (229 aa)) lie on the Cytoplasmic side of the membrane. PXXP repeat units follow at residues 734–737 (PGKP), 774–777 (PSLP), 796–799 (PRQP), 829–832 (PGGP), 870–873 (PGNP), and 888–891 (PGSP). Residues 734 to 891 (PGKPTLVCSS…PDKFIIPGSP (158 aa)) are 6 X 4 AA repeats of P-X-X-P. The tract at residues 738–947 (TLVCSSAVGS…GNSTTDNSDQ (210 aa)) is required for interaction with FYN. Disordered regions lie at residues 754–805 (RRPR…DWRY) and 828–853 (GPGG…EVSP). Positions 892–947 (AIISIRQEPANSQIDKSDFITFGKKEETKKKKKKKKGNKTQEKKEKGNSTTDNSDQ) are disordered. Over residues 906–920 (DKSDFITFGKKEETK) the composition is skewed to basic and acidic residues.

In terms of assembly, forms homodimers in trans (molecules expressed by two different cells). Forms promiscuous heterodimers in cis (at the plasma membrane of the same cell) with other protocadherins. Interacts with FYN.

It localises to the cell membrane. Its function is as follows. Calcium-dependent cell-adhesion protein involved in cells self-recognition and non-self discrimination. Thereby, it is involved in the establishment and maintenance of specific neuronal connections in the brain. In Pan troglodytes (Chimpanzee), this protein is Protocadherin alpha-4.